The following is a 354-amino-acid chain: MIDAISFKNGTFRYLDQRFLPLQEIHVETKNHQEAIEAIKTLAVRGAPLIGASAGYTVVLGINEYTGDKAGFPEYFKNLIAEVNASRPTAVNLFFATKKMQEVYDANFENDSLEALFAKMTDMAYKIHNDEIDNCDKIARHGVELLKQDFADVLKTRKLNVLTHCNTGTLACCGIGTALGVIRLAYQEGLIERVITSESRPLLQGLRLTAWELEHDGIPFASISDSSSAILMQRGMIDFAITGADRITANGDTANKIGTYAHAISARYHGLPFYIAAPVSTIDITMAEGSEIPIEERNPDELRKIFGTQVATPTTPVVNFAFDVTPGTLIRGIITEKGAVVGNYNEGLARVVNG.

Substrate-binding positions include 45 to 47 (RGA), Arg87, and Gln204. Asp245 serves as the catalytic Proton donor. 255 to 256 (NK) serves as a coordination point for substrate.

It belongs to the eIF-2B alpha/beta/delta subunits family. MtnA subfamily.

It catalyses the reaction 5-(methylsulfanyl)-alpha-D-ribose 1-phosphate = 5-(methylsulfanyl)-D-ribulose 1-phosphate. The protein operates within amino-acid biosynthesis; L-methionine biosynthesis via salvage pathway; L-methionine from S-methyl-5-thio-alpha-D-ribose 1-phosphate: step 1/6. Catalyzes the interconversion of methylthioribose-1-phosphate (MTR-1-P) into methylthioribulose-1-phosphate (MTRu-1-P). This Chlorobaculum tepidum (strain ATCC 49652 / DSM 12025 / NBRC 103806 / TLS) (Chlorobium tepidum) protein is Methylthioribose-1-phosphate isomerase.